A 344-amino-acid polypeptide reads, in one-letter code: N-acetyl-gamma-glutamyl-phosphate reductase (344 aa).

Residue Cys-150 is part of the active site.

This sequence belongs to the NAGSA dehydrogenase family. Type 1 subfamily.

It localises to the cytoplasm. It catalyses the reaction N-acetyl-L-glutamate 5-semialdehyde + phosphate + NADP(+) = N-acetyl-L-glutamyl 5-phosphate + NADPH + H(+). It participates in amino-acid biosynthesis; L-arginine biosynthesis; N(2)-acetyl-L-ornithine from L-glutamate: step 3/4. Its function is as follows. Catalyzes the NADPH-dependent reduction of N-acetyl-5-glutamyl phosphate to yield N-acetyl-L-glutamate 5-semialdehyde. In Pseudomonas aeruginosa (strain ATCC 15692 / DSM 22644 / CIP 104116 / JCM 14847 / LMG 12228 / 1C / PRS 101 / PAO1), this protein is N-acetyl-gamma-glutamyl-phosphate reductase.